We begin with the raw amino-acid sequence, 99 residues long: Protein dpy-30 homolog (99 aa).

N-acetylmethionine is present on Met-1. The disordered stretch occupies residues 1-26 (MEPEQMLEGQTQVAENPHSEYGLTDN). The residue at position 19 (Ser-19) is a Phosphoserine. Lys-35 carries the post-translational modification N6-acetyllysine; alternate. A Glycyl lysine isopeptide (Lys-Gly) (interchain with G-Cter in SUMO2); alternate cross-link involves residue Lys-35.

This sequence belongs to the dpy-30 family. In terms of assembly, homodimer. Core component of several methyltransferase-containing complexes including MLL1/MLL, MLL2/3 (also named ASCOM complex) and MLL4/WBP7. Each complex is at least composed of ASH2L, RBBP5, WDR5, DPY30, one or more specific histone methyltransferases (KMT2A/MLL1, KMT2D/MLL2, KMT2C/MLL3 and KMT2B/MLL4), and the facultative components MEN1, HCFC1, HCFC2, NCOA6, KDM6A, PAXIP1/PTIP, PAGR1 and alpha- and beta-tubulin. Interacts with ASH2L; the interaction is direct. Interacts with ARFGEF1. Component of the SET1 complex, at least composed of the catalytic subunit (SETD1A or SETD1B), WDR5, WDR82, RBBP5, ASH2L/ASH2, CXXC1/CFP1, HCFC1 and DPY30.

It is found in the nucleus. The protein resides in the golgi apparatus. The protein localises to the trans-Golgi network. Its function is as follows. As part of the MLL1/MLL complex, involved in the methylation of histone H3 at 'Lys-4', particularly trimethylation. Histone H3 'Lys-4' methylation represents a specific tag for epigenetic transcriptional activation. May play some role in histone H3 acetylation. In embryonic stem cells, may play a crucial role in retinoic acid-induced differentiation along the neural lineage, regulating gene induction and H3 'Lys-4' methylation at key developmental loci. May also play an indirect or direct role in endosomal transport. In Bos taurus (Bovine), this protein is Protein dpy-30 homolog (DPY30).